A 377-amino-acid chain; its full sequence is Nitric oxide reductase FlRd-NAD(+) reductase (377 aa).

This sequence belongs to the FAD-dependent oxidoreductase family. Requires FAD as cofactor.

The protein localises to the cytoplasm. It catalyses the reaction 2 reduced [nitric oxide reductase rubredoxin domain] + NAD(+) + H(+) = 2 oxidized [nitric oxide reductase rubredoxin domain] + NADH. It functions in the pathway nitrogen metabolism; nitric oxide reduction. Its function is as follows. One of at least two accessory proteins for anaerobic nitric oxide (NO) reductase. Reduces the rubredoxin moiety of NO reductase. The chain is Nitric oxide reductase FlRd-NAD(+) reductase from Escherichia coli (strain K12 / MC4100 / BW2952).